The following is a 128-amino-acid chain: CD59 glycoprotein (128 aa).

An N-terminal signal peptide occupies residues 1-25 (MGIQGGSVLFGLLLVLAVFCHSGNS). Residues 26-108 (LQCYSCPYPT…ALKNGGTTLS (83 aa)) enclose the UPAR/Ly6 domain. 5 cysteine pairs are disulfide-bonded: Cys-28–Cys-51, Cys-31–Cys-38, Cys-44–Cys-64, Cys-70–Cys-88, and Cys-89–Cys-94. Asn-43 carries an N-linked (GlcNAc...) asparagine glycan. Asn-102 carries GPI-anchor amidated asparagine lipidation. Positions 103 to 128 (GGTTLSKKTVLLLVIPFLVAAWSLHP) are cleaved as a propeptide — removed in mature form.

As to quaternary structure, interacts with T-cell surface antigen CD2. Post-translationally, N- and O-glycosylated.

Its subcellular location is the cell membrane. It localises to the secreted. Its function is as follows. Potent inhibitor of the complement membrane attack complex (MAC) action, which protects self-cells from damage during complement activation. Acts by binding to the beta-haipins of C8 (C8A and C8B) components of the assembling MAC, forming an intermolecular beta-sheet that prevents incorporation of the multiple copies of C9 required for complete formation of the osmolytic pore. The protein is CD59 glycoprotein of Aotus trivirgatus (Three-striped night monkey).